Reading from the N-terminus, the 643-residue chain is Aspartic protease 3 (643 aa).

Positions 1–31 (MEGRTTAGRATPAGFWLFSCCLASVLWSANA) are cleaved as a signal peptide. Positions 87–99 (APEVSGAAGASAS) are enriched in low complexity. Residues 87-116 (APEVSGAAGASASKTSEKPIRPYHTGPSSR) are disordered. The Peptidase A1 domain occupies 281–600 (YVGVIGIGTP…GTRPSLVGIA (320 aa)). Catalysis depends on residues Asp299 and Asp490.

The protein belongs to the peptidase A1 family.

Its subcellular location is the endomembrane system. Inhibited by 49c, a hydroxyethylamine scaffold-based compound. Its function is as follows. Required for the processing-mediated maturation of a subset of microneme proteins, such as MIC6, and rhoptry proteins, such as ROP1. By regulating microneme and rhoptry processing, plays an essential role in the lysis of the host cell membrane during egress and in rhoptry content discharge, which is required for invasion of host cells. This Toxoplasma gondii protein is Aspartic protease 3.